Here is a 120-residue protein sequence, read N- to C-terminus: Large ribosomal subunit protein bL19 (120 aa).

Belongs to the bacterial ribosomal protein bL19 family.

This protein is located at the 30S-50S ribosomal subunit interface and may play a role in the structure and function of the aminoacyl-tRNA binding site. This Rippkaea orientalis (strain PCC 8801 / RF-1) (Cyanothece sp. (strain PCC 8801)) protein is Large ribosomal subunit protein bL19.